A 913-amino-acid polypeptide reads, in one-letter code: Proline and serine-rich protein 1 (913 aa).

Position 1 is an N-acetylmethionine (Met1). Disordered stretches follow at residues Val233–Ser291, Ala488–Lys507, Ser592–Leu618, and Asp888–Gln913. Polar residues predominate over residues Leu251–Gly275. The segment covering Ser276–Ser291 has biased composition (low complexity). The span at Ala488–Asn506 shows a compositional bias: polar residues. Polar residues predominate over residues Tyr893–Gln913.

Interacts with TET2 and OGT; this interaction mediates TET2 O-GlcNAcylation and stability by promoting the interaction between OGT and TET2. Interacts with KDM6A. Interacts with TET1. Glycosylated. Interaction with OGT leads to GlcNAcylation.

Its function is as follows. Mediates OGT interaction with and O-GlcNAcylation of TET2 to control TET2 stabilization at enhancers and CpG islands (CGIs). This chain is Proline and serine-rich protein 1, found in Mus musculus (Mouse).